Here is a 65-residue protein sequence, read N- to C-terminus: Alpha-toxin Lqq4 (65 aa).

Residues 3 to 65 (RDAYIADDKN…VPIRIPGKCR (63 aa)) form the LCN-type CS-alpha/beta domain. Residues 9 to 13 (DDKNC) are specificity module, loop 1. 4 cysteine pairs are disulfide-bonded: C13–C64, C17–C37, C23–C47, and C27–C49. Specificity module, loop regions lie at residues 40–44 (LGKYG) and 57–65 (PIRIPGKCR). R65 carries the arginine amide modification.

This sequence belongs to the long (4 C-C) scorpion toxin superfamily. Sodium channel inhibitor family. Alpha subfamily. Post-translationally, the recombinant toxin which is used for activity tests is not amidated. However, C-terminal amidation does not appear to play an important role in activity, since the non-amidated recombinant toxin and the native toxin (which is amidated) show similar activities on all sodium channels tested. Expressed by the venom gland.

It localises to the secreted. Alpha toxins bind voltage-independently at site-3 of sodium channels (Nav) and inhibit the inactivation of the activated channels, thereby blocking neuronal transmission. Both native and recombinant (non-amidated) toxins inhibit inactivation of Nav1.2/SCN2A (EC(50)=31.2-36.6 nM), Nav1.6/SCN8A (EC(50)=6.9-8.9 nM), and Nav1.7/SCN9A (EC(50)=182.0-260.1 nM). The protein is Alpha-toxin Lqq4 of Leiurus quinquestriatus quinquestriatus (Egyptian scorpion).